We begin with the raw amino-acid sequence, 433 residues long: tRNA modification GTPase MnmE (433 aa).

Positions 24, 81, and 120 each coordinate (6S)-5-formyl-5,6,7,8-tetrahydrofolate. Positions 216-359 (GVEIVVLGAP…LLAALRARVE (144 aa)) constitute a TrmE-type G domain. Asparagine 226 contributes to the K(+) binding site. GTP contacts are provided by residues 226–231 (NAGKST), 245–251 (SDIPGTT), 270–273 (DTAG), and 340–342 (SAR). Serine 230 provides a ligand contact to Mg(2+). 3 residues coordinate K(+): serine 245, isoleucine 247, and threonine 250. Residue threonine 251 participates in Mg(2+) binding. (6S)-5-formyl-5,6,7,8-tetrahydrofolate is bound at residue lysine 433.

Belongs to the TRAFAC class TrmE-Era-EngA-EngB-Septin-like GTPase superfamily. TrmE GTPase family. In terms of assembly, homodimer. Heterotetramer of two MnmE and two MnmG subunits. The cofactor is K(+).

Its subcellular location is the cytoplasm. Exhibits a very high intrinsic GTPase hydrolysis rate. Involved in the addition of a carboxymethylaminomethyl (cmnm) group at the wobble position (U34) of certain tRNAs, forming tRNA-cmnm(5)s(2)U34. The chain is tRNA modification GTPase MnmE from Acidiphilium cryptum (strain JF-5).